The sequence spans 143 residues: Large ribosomal subunit protein uL11 (143 aa).

The protein belongs to the universal ribosomal protein uL11 family. In terms of assembly, part of the ribosomal stalk of the 50S ribosomal subunit. Interacts with L10 and the large rRNA to form the base of the stalk. L10 forms an elongated spine to which L12 dimers bind in a sequential fashion forming a multimeric L10(L12)X complex. In terms of processing, one or more lysine residues are methylated.

Forms part of the ribosomal stalk which helps the ribosome interact with GTP-bound translation factors. This is Large ribosomal subunit protein uL11 from Nitrosospira multiformis (strain ATCC 25196 / NCIMB 11849 / C 71).